A 393-amino-acid polypeptide reads, in one-letter code: Upstream-binding factor 1-like protein 1 (393 aa).

2 DNA-binding regions (HMG box) span residues 100 to 168 and 222 to 288; these read PKRP…ARFR and QKPP…DLWL. The tract at residues 308–393 is disordered; it reads KNMAMTGGPD…SSGEEIEVDV (86 aa). Over residues 365–377 the composition is skewed to basic and acidic residues; it reads EENRKKDREKEES.

The protein resides in the cytoplasm. Its subcellular location is the nucleus. Its function is as follows. Essential for proliferation of the inner cell mass and trophectodermal cells in peri-implantation development. The polypeptide is Upstream-binding factor 1-like protein 1 (Homo sapiens (Human)).